A 50-amino-acid polypeptide reads, in one-letter code: Large ribosomal subunit protein bL33 (50 aa).

This sequence belongs to the bacterial ribosomal protein bL33 family.

The chain is Large ribosomal subunit protein bL33 (rpmG) from Aquifex aeolicus (strain VF5).